Here is a 233-residue protein sequence, read N- to C-terminus: Large ribosomal subunit protein uL1 (233 aa).

Belongs to the universal ribosomal protein uL1 family. In terms of assembly, part of the 50S ribosomal subunit.

Binds directly to 23S rRNA. The L1 stalk is quite mobile in the ribosome, and is involved in E site tRNA release. In terms of biological role, protein L1 is also a translational repressor protein, it controls the translation of the L11 operon by binding to its mRNA. The sequence is that of Large ribosomal subunit protein uL1 from Rhizobium johnstonii (strain DSM 114642 / LMG 32736 / 3841) (Rhizobium leguminosarum bv. viciae).